Here is a 184-residue protein sequence, read N- to C-terminus: Putative rRNA methyltransferase YlbH (184 aa).

Positions 1 to 22 are disordered; the sequence is MRVISGSKKGRSLKAVAGTSTR.

This sequence belongs to the methyltransferase superfamily. RsmD family.

May catalyze the S-adenosyl-L-methionine-dependent methylation of a specific base in rRNA. The protein is Putative rRNA methyltransferase YlbH (ylbH) of Bacillus subtilis (strain 168).